The primary structure comprises 186 residues: Ribosome-recycling factor (186 aa).

It belongs to the RRF family.

The protein localises to the cytoplasm. In terms of biological role, responsible for the release of ribosomes from messenger RNA at the termination of protein biosynthesis. May increase the efficiency of translation by recycling ribosomes from one round of translation to another. The chain is Ribosome-recycling factor from Rhizobium leguminosarum bv. trifolii (strain WSM2304).